A 435-amino-acid polypeptide reads, in one-letter code: Putative FBD-associated F-box protein At5g56820 (435 aa).

In terms of domain architecture, F-box spans 14-60 (SDRISYLPDDLLLRILSFIHTSDAISTSLLSKRWKFVWKMMPTLDLD). Residues 341–390 (VRKPNSVPECLTFHLETLEWQGYAGRPEDKEIAVYILGNALRLNTATISR) enclose the FBD domain.

The polypeptide is Putative FBD-associated F-box protein At5g56820 (Arabidopsis thaliana (Mouse-ear cress)).